The chain runs to 137 residues: Large-conductance mechanosensitive channel (137 aa).

The next 3 helical transmembrane spans lie at 15–35, 38–58, and 80–100; these read VDLAIGVIIGGAFGGLVNSIV, IIMPIIGLITGGIDFSNMFIQ, and GNFVTLLINFLIIAWVLFLVV.

The protein belongs to the MscL family. As to quaternary structure, homopentamer.

It is found in the cell inner membrane. Functionally, channel that opens in response to stretch forces in the membrane lipid bilayer. May participate in the regulation of osmotic pressure changes within the cell. The polypeptide is Large-conductance mechanosensitive channel (Brucella anthropi (strain ATCC 49188 / DSM 6882 / CCUG 24695 / JCM 21032 / LMG 3331 / NBRC 15819 / NCTC 12168 / Alc 37) (Ochrobactrum anthropi)).